Reading from the N-terminus, the 725-residue chain is Exocyst complex component 8 (725 aa).

The residue at position 19 (serine 19) is a Phosphoserine. The tract at residues 116–159 (AASGGEEGGGGAGGRDQLRGQTGFFPSPGGASRDGSGPGEEGKQ) is disordered. Residues 120 to 129 (GEEGGGGAGG) are compositionally biased toward gly residues. A PH domain is found at 182-282 (YLVYNGDLVE…WLEVLEETKR (101 aa)). Residues 285-322 (SEKRRREQEEAAAPRGPPQVTPKASNPFEDEDDDEPTV) form a disordered region. Residues 312-322 (FEDEDDDEPTV) show a composition bias toward acidic residues.

This sequence belongs to the EXO84 family. The exocyst complex is composed of EXOC1, EXOC2, EXOC3, EXOC4, EXOC5, EXOC6, EXOC7 and EXOC8. Interacts (via PH domain) with GTP-bound RALA and RALB. Interacts with SH3BP1; required for the localization of both SH3BP1 and the exocyst to the leading edge of migrating cells.

Its subcellular location is the cytoplasm. The protein localises to the perinuclear region. It is found in the cell projection. It localises to the growth cone. Component of the exocyst complex involved in the docking of exocytic vesicles with fusion sites on the plasma membrane. The polypeptide is Exocyst complex component 8 (EXOC8) (Bos taurus (Bovine)).